The following is a 247-amino-acid chain: E3 ubiquitin-protein ligase RNF182 (247 aa).

The RING-type zinc-finger motif lies at 20 to 68 (CKICYNRYNLKQRKPKVLECCHRVCAKCLYKIIDFGDSPQGVIVCPFCR). Transmembrane regions (helical) follow at residues 184-204 (VLVW…IYLL) and 211-231 (LGVV…VYGF).

Interacts with ATP6V0C.

The protein localises to the membrane. The protein resides in the cytoplasm. The catalysed reaction is S-ubiquitinyl-[E2 ubiquitin-conjugating enzyme]-L-cysteine + [acceptor protein]-L-lysine = [E2 ubiquitin-conjugating enzyme]-L-cysteine + N(6)-ubiquitinyl-[acceptor protein]-L-lysine.. The protein operates within protein modification; protein ubiquitination. Its function is as follows. E3 ubiquitin-protein ligase that mediates the ubiquitination of ATP6V0C and targets it to degradation via the ubiquitin-proteasome pathway. Also plays a role in the inhibition of TLR-triggered innate immune response by mediating 'Lys'-48-linked ubiquitination and subsequent degradation of NF-kappa-B component RELA. This chain is E3 ubiquitin-protein ligase RNF182 (Rnf182), found in Rattus norvegicus (Rat).